A 351-amino-acid chain; its full sequence is Transaldolase (351 aa).

The active-site Schiff-base intermediate with substrate is lysine 138.

This sequence belongs to the transaldolase family. Type 2 subfamily.

Its subcellular location is the cytoplasm. It catalyses the reaction D-sedoheptulose 7-phosphate + D-glyceraldehyde 3-phosphate = D-erythrose 4-phosphate + beta-D-fructose 6-phosphate. It functions in the pathway carbohydrate degradation; pentose phosphate pathway; D-glyceraldehyde 3-phosphate and beta-D-fructose 6-phosphate from D-ribose 5-phosphate and D-xylulose 5-phosphate (non-oxidative stage): step 2/3. Functionally, transaldolase is important for the balance of metabolites in the pentose-phosphate pathway. The polypeptide is Transaldolase (Neisseria meningitidis serogroup C (strain 053442)).